We begin with the raw amino-acid sequence, 1296 residues long: Phosphoribosylformylglycinamidine synthase (1296 aa).

Positions Trp-304–Arg-323 are disordered. ATP-binding positions include Gly-306–Asp-317 and Ala-677. Residues Asp-678, Glu-717, Asn-721, and Asp-885 each coordinate Mg(2+). Ser-887 is an ATP binding site. The segment covering Pro-1000 to Glu-1013 has biased composition (basic and acidic residues). The segment at Pro-1000 to Asn-1019 is disordered. Positions Val-1043–Gly-1296 constitute a Glutamine amidotransferase type-1 domain. Cys-1136 (nucleophile) is an active-site residue. Active-site residues include His-1261 and Glu-1263.

The protein in the N-terminal section; belongs to the FGAMS family. Monomer.

It is found in the cytoplasm. It catalyses the reaction N(2)-formyl-N(1)-(5-phospho-beta-D-ribosyl)glycinamide + L-glutamine + ATP + H2O = 2-formamido-N(1)-(5-O-phospho-beta-D-ribosyl)acetamidine + L-glutamate + ADP + phosphate + H(+). The protein operates within purine metabolism; IMP biosynthesis via de novo pathway; 5-amino-1-(5-phospho-D-ribosyl)imidazole from N(2)-formyl-N(1)-(5-phospho-D-ribosyl)glycinamide: step 1/2. In terms of biological role, phosphoribosylformylglycinamidine synthase involved in the purines biosynthetic pathway. Catalyzes the ATP-dependent conversion of formylglycinamide ribonucleotide (FGAR) and glutamine to yield formylglycinamidine ribonucleotide (FGAM) and glutamate. The polypeptide is Phosphoribosylformylglycinamidine synthase (Yersinia pestis bv. Antiqua (strain Antiqua)).